The chain runs to 122 residues: Large ribosomal subunit protein uL14 (122 aa).

Belongs to the universal ribosomal protein uL14 family. As to quaternary structure, part of the 50S ribosomal subunit. Forms a cluster with proteins L3 and L19. In the 70S ribosome, L14 and L19 interact and together make contacts with the 16S rRNA in bridges B5 and B8. Interacts with ribosomal silencing factor RsfS, which may inhibit ribosomal subunit association.

Its function is as follows. Binds to 23S rRNA. Forms part of two intersubunit bridges in the 70S ribosome. The polypeptide is Large ribosomal subunit protein uL14 (Treponema pallidum (strain Nichols)).